The primary structure comprises 357 residues: 3-isopropylmalate dehydrogenase (357 aa).

Position 76–89 (76–89 (GPKWDNEPSHNRPE)) interacts with NAD(+). Substrate is bound by residues R96, R106, R135, and D223. Residues D223, D247, and D251 each coordinate Mg(2+). Residue 281–293 (GSAPDIAGQDKAN) participates in NAD(+) binding.

Belongs to the isocitrate and isopropylmalate dehydrogenases family. LeuB type 1 subfamily. Homodimer. Mg(2+) serves as cofactor. Requires Mn(2+) as cofactor.

It localises to the cytoplasm. It catalyses the reaction (2R,3S)-3-isopropylmalate + NAD(+) = 4-methyl-2-oxopentanoate + CO2 + NADH. It functions in the pathway amino-acid biosynthesis; L-leucine biosynthesis; L-leucine from 3-methyl-2-oxobutanoate: step 3/4. In terms of biological role, catalyzes the oxidation of 3-carboxy-2-hydroxy-4-methylpentanoate (3-isopropylmalate) to 3-carboxy-4-methyl-2-oxopentanoate. The product decarboxylates to 4-methyl-2 oxopentanoate. The chain is 3-isopropylmalate dehydrogenase from Helicobacter hepaticus (strain ATCC 51449 / 3B1).